Here is a 644-residue protein sequence, read N- to C-terminus: Magnetosome protein MamZ (644 aa).

Residues M1–I427 are major facilitator domain. The next 18 helical transmembrane spans lie at W22–I42, A63–L83, I92–Q112, V113–T133, L159–M179, P185–L205, V254–V274, A281–W301, I311–F331, W337–L357, I369–V389, A403–L423, T440–G460, V478–A498, I518–W538, P553–A573, L588–N608, and G612–F629. The segment at W488–V599 is ferric reductase-like domain.

The protein in the N-terminal section; belongs to the major facilitator superfamily.

Its subcellular location is the magnetosome membrane. Its function is as follows. Required for correct biomineralization of the magnetosome; probably converts and then transports some form of iron. It is partially functionally redundant with MamH. May function with MamX, MamY amd Mms6. This Paramagnetospirillum magneticum (strain ATCC 700264 / AMB-1) (Magnetospirillum magneticum) protein is Magnetosome protein MamZ.